Consider the following 477-residue polypeptide: Proline--tRNA ligase (477 aa).

Belongs to the class-II aminoacyl-tRNA synthetase family. ProS type 3 subfamily. Homodimer.

It is found in the cytoplasm. It carries out the reaction tRNA(Pro) + L-proline + ATP = L-prolyl-tRNA(Pro) + AMP + diphosphate. Catalyzes the attachment of proline to tRNA(Pro) in a two-step reaction: proline is first activated by ATP to form Pro-AMP and then transferred to the acceptor end of tRNA(Pro). The sequence is that of Proline--tRNA ligase from Lachnoclostridium phytofermentans (strain ATCC 700394 / DSM 18823 / ISDg) (Clostridium phytofermentans).